A 312-amino-acid polypeptide reads, in one-letter code: Protein dif-1 (312 aa).

Solcar repeat units follow at residues 2–93 (SDVL…GKWL), 102–193 (MTFI…LKKK), and 203–289 (LSPG…TLAA). 6 helical membrane passes run 5 to 25 (LLNF…GHPF), 69 to 89 (MAAP…GCAV), 104 to 124 (FIQN…VMVP), 172 to 192 (TLLR…YLKK), 209 to 229 (LMAG…ADVL), and 261 to 282 (LFKG…CFFG).

Belongs to the mitochondrial carrier (TC 2.A.29) family.

It localises to the mitochondrion inner membrane. Functionally, seems to play a role in the maintenance of tissue differentiation in the developing embryo, but not for its initiation. This Caenorhabditis elegans protein is Protein dif-1 (dif-1).